The chain runs to 265 residues: Short-chain dehydrogenase/reductase GME11373 (265 aa).

Positions 26, 72, 99, and 132 each coordinate NADP(+). Catalysis depends on proton donor residues serine 148 and serine 149. NADP(+) contacts are provided by tyrosine 163, lysine 167, and threonine 198. Tyrosine 163 serves as the catalytic Proton acceptor. Lysine 167 (lowers pKa of active site Tyr) is an active-site residue.

It belongs to the short-chain dehydrogenases/reductases (SDR) family.

Its pathway is secondary metabolite biosynthesis. Functionally, short-chain dehydrogenase/reductase; part of the gene cluster that mediates the biosynthesis of dibenzodioxocinones such as pestalotiollide B, a novel class of inhibitors against cholesterol ester transfer protein (CEPT). The biosynthesis initiates from condensation of acetate and malonate units catalyzed by the non-reducing PKS pks8/GME11356. Pks8/GME11356 lacks a thioesterase (TE) domain, which is important to the cyclizing of the third ring of atrochrysone carboxylic acid, and the esterase GME11355 might play the role of TE and catalyzes the cyclization reaction of the C ring. The lactamase-like protein GME11357 (or other beta-lactamases in Pestalotiopsis microspora) probably hydrolyzes the thioester bond between the ACP of pks8/GME11356 and the intermediate to release atrochrysone carboxylic acid, which is spontaneously dehydrates to form endocrocin anthrone. Endocrocin anthrone is further converted to emodin via the endocrocin intermediate. Emodin is then oxidized by several enzymes such as the Baeyer-Villiger oxidase GME11358, the oxidoreductase GME11367, the short chain dehydrogenase/reductase GME11373, as well as by other oxidoreductases from the cluster, to modify the A and C rings and open the B ring, and finally yield monodictyphenone. The prenyltransferase GME11375 may catalyze the addition reaction between the C5 side chains and the carbon bone of dibenzodioxocinones. The remaining biochemical reactions to the final product dibenzodioxocinones should be methylation catalyzed by methyltransferase GME11366 and reduction and lactonization reaction catalyzed by a series of oxidordeuctases. The protein is Short-chain dehydrogenase/reductase GME11373 of Pestalotiopsis microspora.